We begin with the raw amino-acid sequence, 290 residues long: MAYLGDPKQTIEVLNRYRFIFQKKFGQNFLIDTHVLEKIIRSAEITKDDLVLEIGPGIGTMTQYLCENAREVVAVEIDKNLIPILEQDTLSSYDNVTIINEDILKVDINQIVKEKNGGKPIKVVANLPYYITTPIIMGLFEAHVPIDNITVMVQKEVADRMQSGPGSKDYGALSLAVQYYADPYIVANVPPNCFMPRPNVGSAVIRLTLHQDAPVKVKNENLLFKLIRASFNQRRKTLANGLNNSPEISLPKEMISEAIEELGVVATIRGEALTLEQFAKLADIIDEKMK.

S-adenosyl-L-methionine is bound by residues Asn-28, Leu-30, Gly-55, Glu-76, Asp-102, and Asn-126.

The protein belongs to the class I-like SAM-binding methyltransferase superfamily. rRNA adenine N(6)-methyltransferase family. RsmA subfamily.

It is found in the cytoplasm. The catalysed reaction is adenosine(1518)/adenosine(1519) in 16S rRNA + 4 S-adenosyl-L-methionine = N(6)-dimethyladenosine(1518)/N(6)-dimethyladenosine(1519) in 16S rRNA + 4 S-adenosyl-L-homocysteine + 4 H(+). Functionally, specifically dimethylates two adjacent adenosines (A1518 and A1519) in the loop of a conserved hairpin near the 3'-end of 16S rRNA in the 30S particle. May play a critical role in biogenesis of 30S subunits. This is Ribosomal RNA small subunit methyltransferase A from Lachnoclostridium phytofermentans (strain ATCC 700394 / DSM 18823 / ISDg) (Clostridium phytofermentans).